Reading from the N-terminus, the 942-residue chain is UvrABC system protein A (942 aa).

32–39 (GLSGSGKS) serves as a coordination point for ATP. The C4-type zinc-finger motif lies at 251–278 (CPVCGFTVPELEPRLFSFNAPFGSCPTC). ABC transporter domains follow at residues 308–589 (WNPI…KKSI) and 609–937 (GNGR…HYLK). 641-648 (GVSGSGKS) is an ATP binding site. The C4-type zinc-finger motif lies at 740–766 (CEACSGDGIIKIEMHFLPDVYVPCEVC).

It belongs to the ABC transporter superfamily. UvrA family. Forms a heterotetramer with UvrB during the search for lesions.

Its subcellular location is the cytoplasm. Its function is as follows. The UvrABC repair system catalyzes the recognition and processing of DNA lesions. UvrA is an ATPase and a DNA-binding protein. A damage recognition complex composed of 2 UvrA and 2 UvrB subunits scans DNA for abnormalities. When the presence of a lesion has been verified by UvrB, the UvrA molecules dissociate. This Streptococcus pyogenes serotype M3 (strain ATCC BAA-595 / MGAS315) protein is UvrABC system protein A.